The primary structure comprises 107 residues: Dispanin subfamily A member 2b (107 aa).

Residues 1 to 31 (MEYRTDQVPMSPRSVQGAPGTLPIRDHLPWS) are Extracellular-facing. A helical membrane pass occupies residues 32–52 (IFNLFYMNVCCLGLTAMIFSV). Residues cysteine 41 and cysteine 42 are each lipidated (S-palmitoyl cysteine). The Cytoplasmic portion of the chain corresponds to 53 to 77 (KSRDRKVVGDVEGARHYGSTARSLN). Residues 78-98 (IAATVLGILLIIILIGLAATG) form a helical membrane-spanning segment. The Extracellular segment spans residues 99–107 (TIQALKYKG).

The protein belongs to the CD225/Dispanin family. In terms of tissue distribution, expressed various cell types in torpedo electric organ and muscle, especially fibroblasts, capillary endothelial cells, and axonal cuff cells.

It is found in the cell membrane. The chain is Dispanin subfamily A member 2b from Torpedo marmorata (Marbled electric ray).